Reading from the N-terminus, the 253-residue chain is Pupal cuticle protein (253 aa).

An N-terminal signal peptide occupies residues 1-18; that stretch reads MKSMIVVACLALACGAHA. Residues 54–66 are compositionally biased toward polar residues; it reads LQQASKNNPNPND. Positions 54–74 are disordered; sequence LQQASKNNPNPNDDGSYDPRW. Repeat copies occupy residues 97-100, 115-118, and 154-157. A compositionally biased stretch (low complexity) spans 155–167; that stretch reads APAQQQWNAPAHQ. Disordered stretches follow at residues 155 to 178 and 187 to 206; these read APAQ…QDWN and APAH…APAH. Over residues 189 to 201 the composition is skewed to polar residues; sequence AHQSWNGAPSWQS.

In terms of biological role, component of the cuticle of the pupae of silk moth. The protein is Pupal cuticle protein (PCP) of Bombyx mori (Silk moth).